Consider the following 262-residue polypeptide: Ribose-5-phosphate isomerase A (262 aa).

Substrate contacts are provided by residues threonine 33–threonine 36, aspartate 89–aspartate 92, and lysine 102–glycine 105. Catalysis depends on glutamate 111, which acts as the Proton acceptor. Lysine 129 lines the substrate pocket.

Belongs to the ribose 5-phosphate isomerase family. Homodimer.

It catalyses the reaction aldehydo-D-ribose 5-phosphate = D-ribulose 5-phosphate. The protein operates within carbohydrate degradation; pentose phosphate pathway; D-ribose 5-phosphate from D-ribulose 5-phosphate (non-oxidative stage): step 1/1. In terms of biological role, catalyzes the reversible conversion of ribose-5-phosphate to ribulose 5-phosphate. The protein is Ribose-5-phosphate isomerase A of Ruegeria sp. (strain TM1040) (Silicibacter sp.).